The sequence spans 187 residues: Large ribosomal subunit protein uL5 (187 aa).

It belongs to the universal ribosomal protein uL5 family. Part of the 50S ribosomal subunit; part of the 5S rRNA/L5/L18/L25 subcomplex. Contacts the 5S rRNA and the P site tRNA. Forms a bridge to the 30S subunit in the 70S ribosome.

Its function is as follows. This is one of the proteins that bind and probably mediate the attachment of the 5S RNA into the large ribosomal subunit, where it forms part of the central protuberance. In the 70S ribosome it contacts protein S13 of the 30S subunit (bridge B1b), connecting the 2 subunits; this bridge is implicated in subunit movement. Contacts the P site tRNA; the 5S rRNA and some of its associated proteins might help stabilize positioning of ribosome-bound tRNAs. The polypeptide is Large ribosomal subunit protein uL5 (Mycolicibacterium smegmatis (strain ATCC 700084 / mc(2)155) (Mycobacterium smegmatis)).